Consider the following 196-residue polypeptide: Holliday junction branch migration complex subunit RuvA (196 aa).

The interval 1-65 (MIGNLSGTVD…ENTTQLYGFI (65 aa)) is domain I. Positions 66 to 143 (NKEEQSCLRL…KLETNNNNFY (78 aa)) are domain II. Positions 144 to 147 (PINE) are flexible linker. Positions 147–196 (EDAVSALINLGYEKTKVYDTIKKYKPNLDTKDIIRTALKELSNYEIDIMQ) are domain III.

Belongs to the RuvA family. In terms of assembly, homotetramer. Forms an RuvA(8)-RuvB(12)-Holliday junction (HJ) complex. HJ DNA is sandwiched between 2 RuvA tetramers; dsDNA enters through RuvA and exits via RuvB. An RuvB hexamer assembles on each DNA strand where it exits the tetramer. Each RuvB hexamer is contacted by two RuvA subunits (via domain III) on 2 adjacent RuvB subunits; this complex drives branch migration. In the full resolvosome a probable DNA-RuvA(4)-RuvB(12)-RuvC(2) complex forms which resolves the HJ.

It is found in the cytoplasm. In terms of biological role, the RuvA-RuvB-RuvC complex processes Holliday junction (HJ) DNA during genetic recombination and DNA repair, while the RuvA-RuvB complex plays an important role in the rescue of blocked DNA replication forks via replication fork reversal (RFR). RuvA specifically binds to HJ cruciform DNA, conferring on it an open structure. The RuvB hexamer acts as an ATP-dependent pump, pulling dsDNA into and through the RuvAB complex. HJ branch migration allows RuvC to scan DNA until it finds its consensus sequence, where it cleaves and resolves the cruciform DNA. The sequence is that of Holliday junction branch migration complex subunit RuvA from Wolbachia sp. subsp. Brugia malayi (strain TRS).